A 155-amino-acid polypeptide reads, in one-letter code: Microsomal glutathione S-transferase 1 (155 aa).

Residues 3–9 (DLTQVMD) lie on the Lumenal side of the membrane. A helical membrane pass occupies residues 10–33 (DEVFMAFASYATIILSKMMLMSTA). Residues 34 to 62 (TAFYRLTRKVFANPEDCVAFGKGENAKKY) lie on the Cytoplasmic side of the membrane. Residue R38 coordinates glutathione. 3 positions are modified to N6-acetyllysine: K42, K55, and K60. Residues 63 to 96 (LRTDDRVERVRRAHLNDLENIIPFLGIGLLYSLS) form a helical membrane-spanning segment. The glutathione site is built by R73, R74, H76, and E81. Residues 97–99 (GPD) lie on the Lumenal side of the membrane. Residues 100–123 (PSTAILHFRLFVGARIYHTIAYLT) traverse the membrane as a helical segment. Y121 is a glutathione binding site. At 124–128 (PLPQP) the chain is on the cytoplasmic side. A helical membrane pass occupies residues 129–148 (NRALSFFVGYGVTLSMAYRL). At 149 to 155 (LKSKLYL) the chain is on the lumenal side.

The protein belongs to the MAPEG family. In terms of assembly, homotrimer; The trimer binds only one molecule of glutathione. As to expression, highly expressed in liver.

Its subcellular location is the endoplasmic reticulum membrane. The protein resides in the mitochondrion outer membrane. The enzyme catalyses RX + glutathione = an S-substituted glutathione + a halide anion + H(+). In terms of biological role, conjugation of reduced glutathione to a wide number of exogenous and endogenous hydrophobic electrophiles. This chain is Microsomal glutathione S-transferase 1 (MGST1), found in Homo sapiens (Human).